The following is a 66-amino-acid chain: Potassium channel toxin alpha-KTx 27.3 (66 aa).

A signal peptide spans 1–17 (MKLMWLLFLCVLAFSIA).

The protein belongs to the short scorpion toxin superfamily. Potassium channel inhibitor family. Alpha-KTx 27 subfamily. In terms of processing, contains 4 disulfide bonds. As to expression, expressed by the venom gland.

The protein localises to the secreted. The polypeptide is Potassium channel toxin alpha-KTx 27.3 (Lychas mucronatus (Chinese swimming scorpion)).